We begin with the raw amino-acid sequence, 178 residues long: MSENQNPSPSPEEIEAAMSANAADELNRLQGELAELKAKSADLADQFLRAKAEAENARRRAEDEVAKARKFGIESFAESLLPVCDSLDAALAIENATAEQLREGSDATLRQLMSALERNKVVIVNPEAGTKFDPHQHQAISMVPADQEANTVVSVLQKGYLISDRVLRPALVTVAAPK.

The interval 1–22 (MSENQNPSPSPEEIEAAMSANA) is disordered.

It belongs to the GrpE family. Homodimer.

It is found in the cytoplasm. Its function is as follows. Participates actively in the response to hyperosmotic and heat shock by preventing the aggregation of stress-denatured proteins, in association with DnaK and GrpE. It is the nucleotide exchange factor for DnaK and may function as a thermosensor. Unfolded proteins bind initially to DnaJ; upon interaction with the DnaJ-bound protein, DnaK hydrolyzes its bound ATP, resulting in the formation of a stable complex. GrpE releases ADP from DnaK; ATP binding to DnaK triggers the release of the substrate protein, thus completing the reaction cycle. Several rounds of ATP-dependent interactions between DnaJ, DnaK and GrpE are required for fully efficient folding. The sequence is that of Protein GrpE from Acidovorax ebreus (strain TPSY) (Diaphorobacter sp. (strain TPSY)).